The chain runs to 83 residues: Alpha-neurotoxin NTX-2 (83 aa).

The N-terminal stretch at 1-21 (MKTLLLTLLVVTIVCLDLGYT) is a signal peptide. 4 disulfides stabilise this stretch: C24-C45, C38-C62, C64-C75, and C76-C81.

This sequence belongs to the three-finger toxin family. Short-chain subfamily. Type I alpha-neurotoxin sub-subfamily. In terms of tissue distribution, expressed by the venom gland.

The protein localises to the secreted. Functionally, binds to muscle nicotinic acetylcholine receptor (nAChR) and inhibit acetylcholine from binding to the receptor, thereby impairing neuromuscular transmission. The sequence is that of Alpha-neurotoxin NTX-2 from Naja sputatrix (Malayan spitting cobra).